The chain runs to 544 residues: Chaperonin GroEL 1 (544 aa).

Residues 30–33 (TLGP), Lys-51, 87–91 (DGTTT), Gly-415, 481–483 (DAL), and Asp-497 contribute to the ATP site.

The protein belongs to the chaperonin (HSP60) family. As to quaternary structure, forms a cylinder of 14 subunits composed of two heptameric rings stacked back-to-back. Interacts with the co-chaperonin GroES.

Its subcellular location is the cytoplasm. The catalysed reaction is ATP + H2O + a folded polypeptide = ADP + phosphate + an unfolded polypeptide.. Functionally, together with its co-chaperonin GroES, plays an essential role in assisting protein folding. The GroEL-GroES system forms a nano-cage that allows encapsulation of the non-native substrate proteins and provides a physical environment optimized to promote and accelerate protein folding. The sequence is that of Chaperonin GroEL 1 from Chlamydia caviae (strain ATCC VR-813 / DSM 19441 / 03DC25 / GPIC) (Chlamydophila caviae).